Consider the following 88-residue polypeptide: Small ribosomal subunit protein bS20 (88 aa).

The span at 1–21 shows a compositional bias: basic residues; sequence MANSKSAKKRALQSEKRRQHN. Residues 1-26 form a disordered region; sequence MANSKSAKKRALQSEKRRQHNASRSS.

Belongs to the bacterial ribosomal protein bS20 family.

In terms of biological role, binds directly to 16S ribosomal RNA. In Shewanella halifaxensis (strain HAW-EB4), this protein is Small ribosomal subunit protein bS20.